The primary structure comprises 1003 residues: UPF0182 protein Mkms_1433 (1003 aa).

The next 7 membrane-spanning stretches (helical) occupy residues 18–38 (VLIGVALAAVVLLLIGPRFID), 63–83 (VVVFLVVSLLIGAIVFAGLAL), 114–134 (LFGFGVPAFIGILSGIVAQSY), 176–196 (FVATFLAFIANLLGHYLFGGI), 211–231 (IQLVTLVGILILLKAFAYWLD), 260–280 (KLILLAIAVICAVAVFSAIVL), and 288–308 (IGVVLLLLSSLVVGAGWPLVV). Residues 902–937 (ATGPAPANLPDGQPAAQPPNGQQPAAQTPGNQAGRA) are compositionally biased toward low complexity. Residues 902–979 (ATGPAPANLP…MSGLQDAQRS (78 aa)) form a disordered region.

This sequence belongs to the UPF0182 family.

It localises to the cell membrane. This is UPF0182 protein Mkms_1433 from Mycobacterium sp. (strain KMS).